Consider the following 353-residue polypeptide: Mitochondrial distribution and morphology protein 10 (353 aa).

The protein belongs to the MDM10 family. As to quaternary structure, component of the ER-mitochondria encounter structure (ERMES) or MDM complex, composed of MMM1, MDM10, MDM12 and MDM34. Associates with the mitochondrial outer membrane sorting assembly machinery SAM(core) complex.

It is found in the mitochondrion outer membrane. In terms of biological role, component of the ERMES/MDM complex, which serves as a molecular tether to connect the endoplasmic reticulum and mitochondria. Components of this complex are involved in the control of mitochondrial shape and protein biogenesis and may function in phospholipid exchange. MDM10 is involved in the late assembly steps of the general translocase of the mitochondrial outer membrane (TOM complex). Functions in the TOM40-specific route of the assembly of outer membrane beta-barrel proteins, including the association of TOM40 with the receptor TOM22 and small TOM proteins. Can associate with the SAM(core) complex as well as the MDM12-MMM1 complex, both involved in late steps of the major beta-barrel assembly pathway, that is responsible for biogenesis of all outer membrane beta-barrel proteins. May act as a switch that shuttles between both complexes and channels precursor proteins into the TOM40-specific pathway. Plays a role in mitochondrial morphology and in the inheritance of mitochondria. The chain is Mitochondrial distribution and morphology protein 10 from Yarrowia lipolytica (strain CLIB 122 / E 150) (Yeast).